A 122-amino-acid chain; its full sequence is Ribosome-binding factor A (122 aa).

It belongs to the RbfA family. Monomer. Binds 30S ribosomal subunits, but not 50S ribosomal subunits or 70S ribosomes.

Its subcellular location is the cytoplasm. Functionally, one of several proteins that assist in the late maturation steps of the functional core of the 30S ribosomal subunit. Associates with free 30S ribosomal subunits (but not with 30S subunits that are part of 70S ribosomes or polysomes). Required for efficient processing of 16S rRNA. May interact with the 5'-terminal helix region of 16S rRNA. The protein is Ribosome-binding factor A of Halothermothrix orenii (strain H 168 / OCM 544 / DSM 9562).